A 668-amino-acid polypeptide reads, in one-letter code: Fructose-1,6-bisphosphatase class 3 (668 aa).

It belongs to the FBPase class 3 family. Mn(2+) serves as cofactor.

It carries out the reaction beta-D-fructose 1,6-bisphosphate + H2O = beta-D-fructose 6-phosphate + phosphate. It participates in carbohydrate biosynthesis; gluconeogenesis. In Clostridium botulinum (strain 657 / Type Ba4), this protein is Fructose-1,6-bisphosphatase class 3.